Here is a 404-residue protein sequence, read N- to C-terminus: Retrotransposable element SLACS 45 kDa protein (404 aa).

Polar residues-rich tracts occupy residues 1-11 and 29-41; these read MVRNLRSSEPQ and PALN…QKQV. 5 disordered regions span residues 1–62, 86–111, 134–251, 317–341, and 369–404; these read MVRN…NTSI, KKAA…GRPP, LGKG…KKGA, CRQQ…GAVS, and PKLP…AGPP. The segment covering 98–111 has biased composition (basic and acidic residues); the sequence is VNKEGNRKKYGRPP. Over residues 141 to 151 the composition is skewed to polar residues; that stretch reads TAHTKSNQSRV. The C2H2-type zinc-finger motif lies at 300–321; the sequence is CPVCGFAHPEETITVTHCRQQH. The segment covering 395–404 has biased composition (basic and acidic residues); the sequence is HHCDRSAGPP.

This chain is Retrotransposable element SLACS 45 kDa protein, found in Trypanosoma brucei gambiense.